We begin with the raw amino-acid sequence, 369 residues long: Phosphate acyltransferase (369 aa).

The interval 342-369 (ASRAPNSQTAGGERAAAVPQSAQLRMDS) is disordered.

This sequence belongs to the PlsX family. In terms of assembly, homodimer. Probably interacts with PlsY.

The protein resides in the cytoplasm. The enzyme catalyses a fatty acyl-[ACP] + phosphate = an acyl phosphate + holo-[ACP]. It participates in lipid metabolism; phospholipid metabolism. Its function is as follows. Catalyzes the reversible formation of acyl-phosphate (acyl-PO(4)) from acyl-[acyl-carrier-protein] (acyl-ACP). This enzyme utilizes acyl-ACP as fatty acyl donor, but not acyl-CoA. In Methylocella silvestris (strain DSM 15510 / CIP 108128 / LMG 27833 / NCIMB 13906 / BL2), this protein is Phosphate acyltransferase.